Consider the following 377-residue polypeptide: Short chain dehydrogenase gsfE (377 aa).

Residues aspartate 89, glutamine 121, tyrosine 226, alanine 266, and serine 268 each coordinate NADP(+). Tyrosine 226 (proton donor) is an active-site residue.

It belongs to the short-chain dehydrogenases/reductases (SDR) family. Highly divergent.

The catalysed reaction is dehydrogriseofulvin + NADPH + H(+) = griseofulvin + NADP(+). It functions in the pathway secondary metabolite biosynthesis; terpenoid biosynthesis. Functionally, short chain dehydrogenase; part of the gene cluster that mediates the biosynthesis of griseofulvin, an important antifungal drug that has been in use for a long time for treating dermatophyte infections. The first step of the pathway is the formation of the heptaketide backbone by gsfA which is initiated by priming with acetyl-CoA, followed by sequential condensations of 6 malonyl-CoA units. The resulting benzophenone can undergo a spontaneous dehydration to form norlichexanthone. However, the true precursor for the griseofulvin biosynthesis is not norlichexanthone, but the heptaketide benzophenone that is O-methylated at 3-OH by gsfB to produce griseophenone D which is further methylated at 9-OH by gsfC to yield griseophenone C. Griseophenone C is then substrate of halogenase gsfI which is responsible for the regio-specific chlorination at the C13 position to form griseophenone B. The cytochrome P450 gsfF catalyzes the coupling of orcinol and phloroglucinol rings in griseophenone B to form desmethyl-dehydrogriseofulvin A which is further methylated at 5-OH by gsfD to yield dehydrogriseofulvin. Finally, gsfE performs stereospecific reduction of enone 18 of dehydrogriseofulvin to afford the final product griseofulvin. This chain is Short chain dehydrogenase gsfE, found in Penicillium aethiopicum.